We begin with the raw amino-acid sequence, 400 residues long: Aspartate/prephenate aminotransferase (400 aa).

Residues G39, W125, and N175 each coordinate L-aspartate. K239 is subject to N6-(pyridoxal phosphate)lysine. L-aspartate is bound at residue R375.

It belongs to the class-I pyridoxal-phosphate-dependent aminotransferase family. As to quaternary structure, homodimer. Pyridoxal 5'-phosphate serves as cofactor.

The protein localises to the cytoplasm. It catalyses the reaction L-aspartate + 2-oxoglutarate = oxaloacetate + L-glutamate. The catalysed reaction is L-arogenate + 2-oxoglutarate = prephenate + L-glutamate. Catalyzes the reversible conversion of aspartate and 2-oxoglutarate to glutamate and oxaloacetate. Can also transaminate prephenate in the presence of glutamate. This chain is Aspartate/prephenate aminotransferase, found in Cereibacter sphaeroides (strain ATCC 17029 / ATH 2.4.9) (Rhodobacter sphaeroides).